The sequence spans 473 residues: Vasculin (473 aa).

3 disordered regions span residues 1–25, 46–149, and 191–342; these read MAQH…SSLN, RHNS…REPN, and VGNL…QERD. A Phosphoserine modification is found at Ser49. Arg87 bears the Omega-N-methylarginine mark. Basic and acidic residues predominate over residues 119–133; the sequence is ETGRKEDKRERKQFE. Polar residues-rich tracts occupy residues 194–204 and 251–286; these read LPSQPVKNGTG and AFKS…QQPR. Ser274, Ser276, Ser322, and Ser381 each carry phosphoserine. A compositionally biased stretch (basic and acidic residues) spans 293 to 329; it reads MRTDKKSEFLKALKRDRVEEEHEDESRAGSEKDDDSF. The disordered stretch occupies residues 444-473; that stretch reads GPWKNSTFKPTTENDDTETSSSDTSDDDDV. Positions 456–473 are enriched in acidic residues; sequence ENDDTETSSSDTSDDDDV.

It belongs to the vasculin family. As to quaternary structure, interacts with GTF2B, GTF2F2, RNA polymerase II and TBP. Widely expressed. Some isoforms may be specifically expressed in veins and arteries (at protein level). Isoform 4 is widely expressed. Isoform 1, isoform 2 and isoform 3 may be specifically expressed in vascular smooth muscle cells.

The protein resides in the nucleus. It localises to the cytoplasm. Functionally, functions as a GC-rich promoter-specific transactivating transcription factor. The sequence is that of Vasculin (GPBP1) from Homo sapiens (Human).